A 629-amino-acid chain; its full sequence is Glutamyl-tRNA(Gln) amidotransferase subunit E (629 aa).

The disordered stretch occupies residues 405–426 (PEETRRALPDGNTQYMRPLPGK).

Belongs to the GatB/GatE family. GatE subfamily. As to quaternary structure, heterodimer of GatD and GatE.

It catalyses the reaction L-glutamyl-tRNA(Gln) + L-glutamine + ATP + H2O = L-glutaminyl-tRNA(Gln) + L-glutamate + ADP + phosphate + H(+). Functionally, allows the formation of correctly charged Gln-tRNA(Gln) through the transamidation of misacylated Glu-tRNA(Gln) in organisms which lack glutaminyl-tRNA synthetase. The reaction takes place in the presence of glutamine and ATP through an activated gamma-phospho-Glu-tRNA(Gln). The GatDE system is specific for glutamate and does not act on aspartate. The protein is Glutamyl-tRNA(Gln) amidotransferase subunit E of Thermococcus sibiricus (strain DSM 12597 / MM 739).